The primary structure comprises 399 residues: Bombesin receptor subtype-3 (399 aa).

Residues 1-41 (MSQRQSQSPNQTLISITNDTETSSSVVSNDTTHKGWTGDNS) are Extracellular-facing. 3 N-linked (GlcNAc...) asparagine glycosylation sites follow: Asn-10, Asn-18, and Asn-29. A helical transmembrane segment spans residues 42–63 (PGIEALCAIYITYAGIISVGIL). Topologically, residues 64-82 (GNAILIKVFFKTKSMQTVP) are cytoplasmic. The helical transmembrane segment at 83-103 (NIFITSLAFGDLLLLLTCVPV) threads the bilayer. Residues 104 to 121 (DATHYLAEGWLFGKVGCK) are Extracellular-facing. A disulfide bridge connects residues Cys-120 and Cys-203. A helical transmembrane segment spans residues 122–143 (VLSFIRLTSVGVSVFTLTILSA). At 144–163 (DRYKAVVKPLERQPPNAILK) the chain is on the cytoplasmic side. The chain crosses the membrane as a helical span at residues 164–184 (TCAKAGGIWIVSMIFALPEAI). Topologically, residues 185 to 220 (FSNVYTFQDPNRNVTFESCNSYPISERLLQEIHSLL) are extracellular. Residues 221–241 (CFLVFYIIPLSIISVYYSLIA) form a helical membrane-spanning segment. Residues 242-272 (RTLYKSTLNIPTEEQSHARKQIESRKRIAKT) lie on the Cytoplasmic side of the membrane. A helical membrane pass occupies residues 273–293 (VLVLVALFALCWLPNHLLYLY). Over 294–313 (HSFTYESYANHSDVPFVIII) the chain is Extracellular. The chain crosses the membrane as a helical span at residues 314–333 (FSRVLAFSNSCVNPFALYWL). The Cytoplasmic portion of the chain corresponds to 334–399 (SKTFQQHFKA…SSAKKGEDKV (66 aa)). Cys-347 is lipidated: S-palmitoyl cysteine.

Belongs to the G-protein coupled receptor 1 family. In terms of assembly, interacts with C6orf89.

It is found in the cell membrane. Functionally, role in sperm cell division, maturation, or function. This receptor mediates its action by association with G proteins that activate a phosphatidylinositol-calcium second messenger system. The polypeptide is Bombesin receptor subtype-3 (Brs3) (Mus musculus (Mouse)).